The primary structure comprises 237 residues: MSAPASTTQPIGSTTSTTTKTAGATPATASGLFTIPDGDFFSTARAIVASNAVATNEDLSKIEAIWKDMKVPTDTMAQAAWDLVRHCADVGSSAQTEMIDTGPYSNGISRARLAAAIKEVCTLRQFCMKYAPVVWNWMLTNNSPPANWQAQGFKPEHKFAAFDFFNGVTNPAAIMPKEGLIRPPSEAEMNAAQTAAFVKITKARAQSNDFASLDAAVTRGRITGTTTAEAVVTLPPP.

Residues 1-24 are disordered; it reads MSAPASTTQPIGSTTSTTTKTAGA.

Belongs to the potexvirus capsid protein family.

The protein resides in the virion. Required for genome encapsidation. Forms ribonucleoprotein complexes along with TGB1 helicase and viral RNA. This is Coat protein from Potato virus X (strain UK3) (PVX).